The primary structure comprises 159 residues: MKKIIAMSLLMFSVVMSVNAKNTVASKKEEQIAQPIAGFRLFDLSGKAPQLIEGNKFSRAKPHQLCIFVENVEVKEQNLLAEYFVAPAPIRMQAENAETRTTEDGTGNLIIFNLPKANIASGAITQCWQFSKNDPVGTYQLELQFNDIVFKGLAFQILK.

Residues 1-20 (MKKIIAMSLLMFSVVMSVNA) form the signal peptide.

This is an uncharacterized protein from Pasteurella multocida (strain Pm70).